Consider the following 327-residue polypeptide: Ubiquinone biosynthesis O-methyltransferase, mitochondrial (327 aa).

Residues arginine 79, glycine 142, aspartate 165, and phenylalanine 210 each coordinate S-adenosyl-L-methionine. Glutamate 211, glutamate 214, and histidine 215 together coordinate Mg(2+).

The protein belongs to the class I-like SAM-binding methyltransferase superfamily. UbiG/COQ3 family. In terms of assembly, component of a multi-subunit COQ enzyme complex, composed of at least COQ3, COQ4, COQ5, COQ6, COQ7 and COQ9. Mg(2+) serves as cofactor.

It localises to the mitochondrion inner membrane. It catalyses the reaction a 3,4-dihydroxy-5-(all-trans-polyprenyl)benzoate + S-adenosyl-L-methionine = a 4-hydroxy-3-methoxy-5-(all-trans-polyprenyl)benzoate + S-adenosyl-L-homocysteine + H(+). The enzyme catalyses a 3-demethylubiquinone + S-adenosyl-L-methionine = a ubiquinone + S-adenosyl-L-homocysteine. It carries out the reaction a 3-demethylubiquinol + S-adenosyl-L-methionine = a ubiquinol + S-adenosyl-L-homocysteine + H(+). It participates in cofactor biosynthesis; ubiquinone biosynthesis. Its function is as follows. O-methyltransferase required for two non-consecutive steps during ubiquinone biosynthesis. Catalyzes the 2 O-methylation of 3,4-dihydroxy-5-(all-trans-polyprenyl)benzoic acid into 4-hydroxy-3-methoxy-5-(all-trans-polyprenyl)benzoic acid. Also catalyzes the last step of ubiquinone biosynthesis by mediating methylation of 3-demethylubiquinone into ubiquinone. Also able to mediate the methylation of 3-demethylubiquinol into ubiquinol. The sequence is that of Ubiquinone biosynthesis O-methyltransferase, mitochondrial from Candida albicans (Yeast).